Here is a 123-residue protein sequence, read N- to C-terminus: Large ribosomal subunit protein uL29 (123 aa).

Belongs to the universal ribosomal protein uL29 family.

This is Large ribosomal subunit protein uL29 (RPL35) from Theileria lestoquardi.